The following is a 299-amino-acid chain: Heterodisulfide reductase subunit B-like protein (299 aa).

Belongs to the HdrB family. In terms of assembly, the heterodisulfide reductase is composed of three subunits; HdlA, HdlB and HdlC. It forms a complex with the F420-non-reducing hydrogenase (Mvh), which provides the reducing equivalents to the heterodisulfide reductase.

It is found in the cytoplasm. Its function is as follows. Has oxidoreductase activity. The Hdl and Mvh subunits may together mediate electron transfer from hydrogen to an unidentified electron acceptor on the cytoplasmic side of the membrane. This Archaeoglobus profundus (strain DSM 5631 / JCM 9629 / NBRC 100127 / Av18) protein is Heterodisulfide reductase subunit B-like protein (hdlB).